Consider the following 453-residue polypeptide: MMESEVDSEQSRLKREIAELRAALNRKEQCLRELEASVSSDASAEEQVVGNALESPGRAVHTKLTNDDIARYSRQLILPDFGVQGQLKLKNSSVLIVGLGGLGCPAAQYLAAAGCGRLGLIDYDEVERSNFHRQILHSESRCGMSKAESARIALLELNPHCEIHCHSRLLYSQNALHIIRGYDVVLDCSDNVPTRYLLSDACVMLRKPLVSGSALKMDGQLTVYNYGNGPCYRCIYPVPPPPEAVTNCGDGGVLGAVTGTIGAMQALEAIKVIVGLGDVLAGRLLIFDGSSGLFRNIRIRSKRPNCHVCSAQPLITELIDYEMFCGMHATDKDNPLQLLSTDERLSVKDYHAKLQAQPHLLIDVRPTAEFEICQLPEAVNVPLVEILDDSYLKRFGKQLEDKELPIILLCRRGNDSQIAVQHVRNRFPMHSVRDLIGGLHAWTNSVDPSFPIY.

Threonine 62 is subject to Phosphothreonine. ATP is bound by residues glycine 101, aspartate 122, 129–133, lysine 146, and 190–191; these read SNFHR and DN. Positions 231 and 234 each coordinate Zn(2+). Cysteine 248 acts as the Glycyl thioester intermediate; for adenylyltransferase activity in catalysis. 2 residues coordinate Zn(2+): cysteine 306 and cysteine 309. One can recognise a Rhodanese domain in the interval 355-451; sequence QAQPHLLIDV…WTNSVDPSFP (97 aa). The Cysteine persulfide intermediate; for sulfurtransferase activity role is filled by cysteine 410.

This sequence in the N-terminal section; belongs to the HesA/MoeB/ThiF family. UBA4 subfamily. It depends on Zn(2+) as a cofactor.

It is found in the cytoplasm. It localises to the cytosol. The catalysed reaction is [molybdopterin-synthase sulfur-carrier protein]-C-terminal Gly-Gly + ATP + H(+) = [molybdopterin-synthase sulfur-carrier protein]-C-terminal Gly-Gly-AMP + diphosphate. The enzyme catalyses [molybdopterin-synthase sulfur-carrier protein]-C-terminal Gly-Gly-AMP + S-sulfanyl-L-cysteinyl-[cysteine desulfurase] + AH2 = [molybdopterin-synthase sulfur-carrier protein]-C-terminal-Gly-aminoethanethioate + L-cysteinyl-[cysteine desulfurase] + A + AMP + 2 H(+). Its pathway is tRNA modification; 5-methoxycarbonylmethyl-2-thiouridine-tRNA biosynthesis. It participates in cofactor biosynthesis; molybdopterin biosynthesis. Functionally, plays a central role in 2-thiolation of mcm(5)S(2)U at tRNA wobble positions of cytosolic tRNA(Lys), tRNA(Glu) and tRNA(Gln). Also essential during biosynthesis of the molybdenum cofactor. Acts by mediating the C-terminal thiocarboxylation of sulfur carriers URM1 and MOCS2A. Its N-terminus first activates URM1 and MOCS2A as acyl-adenylates (-COAMP), then the persulfide sulfur on the catalytic cysteine is transferred to URM1 and MOCS2A to form thiocarboxylation (-COSH) of their C-terminus. The reaction probably involves hydrogen sulfide that is generated from the persulfide intermediate and that acts as a nucleophile towards URM1 and MOCS2A. Subsequently, a transient disulfide bond is formed. Does not use thiosulfate as sulfur donor; NFS1 probably acting as a sulfur donor for thiocarboxylation reactions. This Drosophila yakuba (Fruit fly) protein is Adenylyltransferase and sulfurtransferase MOCS3.